A 177-amino-acid chain; its full sequence is Parathyroid hormone-related protein (177 aa).

Positions 1 to 24 (MQRRLVQQWSVAVFLLSYAVPSCG) are cleaved as a signal peptide. Positions 25–34 (RSVEGLSRRL) are excised as a propeptide. Residues 57–68 (RFFLHHLIAEIH) are important for receptor binding. The tract at residues 74 to 177 (ATSEVSPNSK…TSLELDSRRH (104 aa)) is disordered. The span at 76–90 (SEVSPNSKPSPNTKN) shows a compositional bias: polar residues. The Nuclear localization signal motif lies at 108–129 (TNKVETYKEQPLKTPGKKKKGK). The span at 109-118 (NKVETYKEQP) shows a compositional bias: basic and acidic residues. Residues 122–132 (PGKKKKGKPGK) are compositionally biased toward basic residues.

This sequence belongs to the parathyroid hormone family. As to quaternary structure, interacts with PTH1R (via N-terminal extracellular domain). Post-translationally, there are 3 principal secretory forms, called PTHrP[1-36], PTHrP[38-94], and osteostatin (PTHrP[107-139]) arising from endoproteolytic cleavage of the initial translation product. Each of these secretory forms is believed to have one or more of its own receptors that mediates the normal paracrine, autocrine and endocrine actions. Ubiquitous. Also expressed in the mammary gland.

The protein localises to the secreted. Its subcellular location is the cytoplasm. The protein resides in the nucleus. In terms of biological role, neuroendocrine peptide which is a critical regulator of cellular and organ growth, development, migration, differentiation and survival and of epithelial calcium ion transport. Acts by binding to its receptor, PTH1R, activating G protein-coupled receptor signaling. Regulates endochondral bone development and epithelial-mesenchymal interactions during the formation of the mammary glands and teeth. Required for skeletal homeostasis. Promotes mammary mesenchyme differentiation and bud outgrowth by modulating mesenchymal cell responsiveness to BMPs. Up-regulates BMPR1A expression in the mammary mesenchyme and this increases the sensitivity of these cells to BMPs and allows them to respond to BMP4 in a paracrine and/or autocrine fashion. BMP4 signaling in the mesenchyme, in turn, triggers epithelial outgrowth and augments MSX2 expression, which causes the mammary mesenchyme to inhibit hair follicle formation within the nipple sheath. Promotes colon cancer cell migration and invasion in an integrin alpha-6/beta-1-dependent manner through activation of Rac1. Potent inhibitor of osteoclastic bone resorption. The protein is Parathyroid hormone-related protein of Homo sapiens (Human).